The chain runs to 204 residues: Large ribosomal subunit protein uL4 (204 aa).

A disordered region spans residues 47 to 69 (KAQKTRAEVSGGGKKPWRQKGTG).

This sequence belongs to the universal ribosomal protein uL4 family. In terms of assembly, part of the 50S ribosomal subunit.

One of the primary rRNA binding proteins, this protein initially binds near the 5'-end of the 23S rRNA. It is important during the early stages of 50S assembly. It makes multiple contacts with different domains of the 23S rRNA in the assembled 50S subunit and ribosome. Its function is as follows. Forms part of the polypeptide exit tunnel. The chain is Large ribosomal subunit protein uL4 from Cellvibrio japonicus (strain Ueda107) (Pseudomonas fluorescens subsp. cellulosa).